The sequence spans 1217 residues: DNA-directed RNA polymerase subunit beta' (1217 aa).

Cysteine 60, cysteine 62, cysteine 75, and cysteine 78 together coordinate Zn(2+). 3 residues coordinate Mg(2+): aspartate 449, aspartate 451, and aspartate 453. Residues cysteine 818, cysteine 892, cysteine 899, and cysteine 902 each coordinate Zn(2+).

The protein belongs to the RNA polymerase beta' chain family. The RNAP catalytic core consists of 2 alpha, 1 beta, 1 beta' and 1 omega subunit. When a sigma factor is associated with the core the holoenzyme is formed, which can initiate transcription. Mg(2+) is required as a cofactor. It depends on Zn(2+) as a cofactor.

The enzyme catalyses RNA(n) + a ribonucleoside 5'-triphosphate = RNA(n+1) + diphosphate. Functionally, DNA-dependent RNA polymerase catalyzes the transcription of DNA into RNA using the four ribonucleoside triphosphates as substrates. In Enterococcus faecalis (strain ATCC 700802 / V583), this protein is DNA-directed RNA polymerase subunit beta'.